The chain runs to 90 residues: Probable Fe(2+)-trafficking protein (90 aa).

Belongs to the Fe(2+)-trafficking protein family.

In terms of biological role, could be a mediator in iron transactions between iron acquisition and iron-requiring processes, such as synthesis and/or repair of Fe-S clusters in biosynthetic enzymes. This Aliivibrio salmonicida (strain LFI1238) (Vibrio salmonicida (strain LFI1238)) protein is Probable Fe(2+)-trafficking protein.